Consider the following 383-residue polypeptide: RNA-binding motif, single-stranded-interacting protein 2 (383 aa).

Residue Met1 is modified to N-acetylmethionine. A disordered region spans residues 28-56; it reads QMAPPSPRNSTPNSSGGGGGGSGGNDQLS. The span at 42-51 shows a compositional bias: gly residues; the sequence is SGGGGGGSGG. RRM domains follow at residues 58 to 131 and 137 to 222; these read TNLY…MAKQ and TNLY…FADG. The residue at position 108 (Ser108) is a Phosphoserine. Phosphoserine is present on Ser287. A disordered region spans residues 352–383; it reads SSVSAEESNGQQNQLAVEPPSDHGVYPFQFSK.

It localises to the nucleus. This chain is RNA-binding motif, single-stranded-interacting protein 2 (Rbms2), found in Mus musculus (Mouse).